The following is a 548-amino-acid chain: Glutamyl-tRNA(Gln) amidotransferase subunit B, chloroplastic/mitochondrial (548 aa).

The protein belongs to the GatB/GatE family. GatB subfamily. In terms of assembly, subunit of the heterotrimeric GatCAB amidotransferase (AdT) complex, composed of A, B and C subunits.

It localises to the mitochondrion. The protein localises to the plastid. Its subcellular location is the chloroplast. The catalysed reaction is L-glutamyl-tRNA(Gln) + L-glutamine + ATP + H2O = L-glutaminyl-tRNA(Gln) + L-glutamate + ADP + phosphate + H(+). In terms of biological role, allows the formation of correctly charged Gln-tRNA(Gln) through the transamidation of misacylated Glu-tRNA(Gln) in chloroplasts and mitochondria. The reaction takes place in the presence of glutamine and ATP through an activated gamma-phospho-Glu-tRNA(Gln). The sequence is that of Glutamyl-tRNA(Gln) amidotransferase subunit B, chloroplastic/mitochondrial from Sorghum bicolor (Sorghum).